The sequence spans 379 residues: Queuine tRNA-ribosyltransferase (379 aa).

Asp-94 acts as the Proton acceptor in catalysis. Residues Asp-94–Phe-98, Asp-148, Gln-191, and Gly-218 contribute to the substrate site. Residues Gly-249–Ser-255 form an RNA binding region. Asp-268 serves as the catalytic Nucleophile. The interval Thr-273–Arg-277 is RNA binding; important for wobble base 34 recognition. Residues Cys-306, Cys-308, Cys-311, and His-337 each coordinate Zn(2+).

This sequence belongs to the queuine tRNA-ribosyltransferase family. In terms of assembly, homodimer. Within each dimer, one monomer is responsible for RNA recognition and catalysis, while the other monomer binds to the replacement base PreQ1. It depends on Zn(2+) as a cofactor.

It carries out the reaction 7-aminomethyl-7-carbaguanine + guanosine(34) in tRNA = 7-aminomethyl-7-carbaguanosine(34) in tRNA + guanine. It functions in the pathway tRNA modification; tRNA-queuosine biosynthesis. In terms of biological role, catalyzes the base-exchange of a guanine (G) residue with the queuine precursor 7-aminomethyl-7-deazaguanine (PreQ1) at position 34 (anticodon wobble position) in tRNAs with GU(N) anticodons (tRNA-Asp, -Asn, -His and -Tyr). Catalysis occurs through a double-displacement mechanism. The nucleophile active site attacks the C1' of nucleotide 34 to detach the guanine base from the RNA, forming a covalent enzyme-RNA intermediate. The proton acceptor active site deprotonates the incoming PreQ1, allowing a nucleophilic attack on the C1' of the ribose to form the product. After dissociation, two additional enzymatic reactions on the tRNA convert PreQ1 to queuine (Q), resulting in the hypermodified nucleoside queuosine (7-(((4,5-cis-dihydroxy-2-cyclopenten-1-yl)amino)methyl)-7-deazaguanosine). The sequence is that of Queuine tRNA-ribosyltransferase from Bacillus mycoides (strain KBAB4) (Bacillus weihenstephanensis).